Consider the following 145-residue polypeptide: Large ribosomal subunit protein uL15 (145 aa).

Positions 1-55 (MSLLKTLAPKAGSKHAPKRIGRGIGSGMGGTATKGHKGQLARTGGTVRRGFEGGQ) are disordered. The span at 12 to 21 (GSKHAPKRIG) shows a compositional bias: basic residues. The span at 22 to 32 (RGIGSGMGGTA) shows a compositional bias: gly residues.

This sequence belongs to the universal ribosomal protein uL15 family. In terms of assembly, part of the 50S ribosomal subunit.

Binds to the 23S rRNA. This chain is Large ribosomal subunit protein uL15, found in Bdellovibrio bacteriovorus (strain ATCC 15356 / DSM 50701 / NCIMB 9529 / HD100).